The chain runs to 88 residues: RNA-binding protein Hfq (88 aa).

The 60-residue stretch at 9–68 (DPFLNALRRERIPVSIYLVNGIKLQGQIESFDQFVILLKNTVNQMVYKHAISTVVPARAV) folds into the Sm domain. The disordered stretch occupies residues 66–88 (RAVSHHSGEQQRAPSDRPEKTED). A compositionally biased stretch (basic and acidic residues) spans 71-88 (HSGEQQRAPSDRPEKTED).

Belongs to the Hfq family. Homohexamer.

Its function is as follows. RNA chaperone that binds small regulatory RNA (sRNAs) and mRNAs to facilitate mRNA translational regulation in response to envelope stress, environmental stress and changes in metabolite concentrations. Also binds with high specificity to tRNAs. In Vibrio atlanticus (strain LGP32) (Vibrio splendidus (strain Mel32)), this protein is RNA-binding protein Hfq.